The primary structure comprises 345 residues: Phosphate acyltransferase (345 aa).

The protein belongs to the PlsX family. In terms of assembly, homodimer. Probably interacts with PlsY.

It localises to the cytoplasm. It catalyses the reaction a fatty acyl-[ACP] + phosphate = an acyl phosphate + holo-[ACP]. It participates in lipid metabolism; phospholipid metabolism. In terms of biological role, catalyzes the reversible formation of acyl-phosphate (acyl-PO(4)) from acyl-[acyl-carrier-protein] (acyl-ACP). This enzyme utilizes acyl-ACP as fatty acyl donor, but not acyl-CoA. This chain is Phosphate acyltransferase, found in Wolbachia pipientis wMel.